We begin with the raw amino-acid sequence, 387 residues long: Small ribosomal subunit biogenesis GTPase RsgA (387 aa).

The 162-residue stretch at 112 to 273 (YDGLKPVAAN…LIDSPGVREF (162 aa)) folds into the CP-type G domain. Residues 159–162 (NKID) and 213–221 (GQSGVGKSS) contribute to the GTP site. The Zn(2+) site is built by cysteine 297, cysteine 302, histidine 304, and cysteine 310.

Belongs to the TRAFAC class YlqF/YawG GTPase family. RsgA subfamily. In terms of assembly, monomer. Associates with 30S ribosomal subunit, binds 16S rRNA. The cofactor is Zn(2+).

It localises to the cytoplasm. Its function is as follows. One of several proteins that assist in the late maturation steps of the functional core of the 30S ribosomal subunit. Helps release RbfA from mature subunits. May play a role in the assembly of ribosomal proteins into the subunit. Circularly permuted GTPase that catalyzes slow GTP hydrolysis, GTPase activity is stimulated by the 30S ribosomal subunit. The chain is Small ribosomal subunit biogenesis GTPase RsgA from Vibrio cholerae serotype O1 (strain ATCC 39315 / El Tor Inaba N16961).